The chain runs to 68 residues: Large ribosomal subunit protein bL33c (68 aa).

Belongs to the bacterial ribosomal protein bL33 family.

The protein resides in the plastid. It localises to the chloroplast. The chain is Large ribosomal subunit protein bL33c from Pinus koraiensis (Korean pine).